Reading from the N-terminus, the 587-residue chain is Glucosylglycerate phosphorylase (587 aa).

Aspartate 236 serves as the catalytic Nucleophile.

It belongs to the glycosyl hydrolase 13 family. Glucosylglycerate phosphorylase subfamily.

It catalyses the reaction (2R)-2-O-(alpha-D-glucopyranosyl)-glycerate + phosphate = (R)-glycerate + alpha-D-glucose 1-phosphate. Its function is as follows. Catalyzes the reversible phosphorolysis of glucosylglycerate into alpha-D-glucose 1-phosphate (Glc1P) and D-glycerate. May be a regulator of intracellular levels of glucosylglycerate, a compatible solute that primarily protects organisms facing salt stress and very specific nutritional constraints. Cannot catalyze the phosphorolysis of sucrose. In Spirochaeta thermophila (strain ATCC 700085 / DSM 6578 / Z-1203), this protein is Glucosylglycerate phosphorylase.